Consider the following 579-residue polypeptide: Putative truncated flagellar export/assembly protein LfhA (579 aa).

3 consecutive transmembrane segments (helical) span residues 86–106, 124–144, and 177–197; these read AIAG…IGIF, IGDG…AAII, and FVLA…SALL.

It belongs to the FHIPEP (flagella/HR/invasion proteins export pore) family.

The protein localises to the cell inner membrane. This chain is Putative truncated flagellar export/assembly protein LfhA, found in Escherichia coli (strain K12).